Here is a 1396-residue protein sequence, read N- to C-terminus: DNA-directed RNA polymerase subunit beta' (1396 aa).

Positions 72, 74, 87, and 90 each coordinate Zn(2+). Mg(2+) contacts are provided by D463, D465, and D467. Positions 814, 889, 896, and 899 each coordinate Zn(2+).

This sequence belongs to the RNA polymerase beta' chain family. In terms of assembly, the RNAP catalytic core consists of 2 alpha, 1 beta, 1 beta' and 1 omega subunit. When a sigma factor is associated with the core the holoenzyme is formed, which can initiate transcription. The cofactor is Mg(2+). Zn(2+) serves as cofactor.

The enzyme catalyses RNA(n) + a ribonucleoside 5'-triphosphate = RNA(n+1) + diphosphate. Functionally, DNA-dependent RNA polymerase catalyzes the transcription of DNA into RNA using the four ribonucleoside triphosphates as substrates. The polypeptide is DNA-directed RNA polymerase subunit beta' (Chlamydia trachomatis serovar A (strain ATCC VR-571B / DSM 19440 / HAR-13)).